A 214-amino-acid chain; its full sequence is NADH-ubiquinone oxidoreductase chain 5 (214 aa).

Transmembrane regions (helical) follow at residues 14–34 (LNTWALLLTLMATAFTATYSI), 58–78 (PLITAPLTRLALGSITAGMII), 92–112 (MPLITKTAAILMTILGIILAL), and 192–212 (TGLIKAYLGSFALSILVMILM).

Belongs to the complex I subunit 5 family.

Its subcellular location is the mitochondrion inner membrane. It catalyses the reaction a ubiquinone + NADH + 5 H(+)(in) = a ubiquinol + NAD(+) + 4 H(+)(out). Core subunit of the mitochondrial membrane respiratory chain NADH dehydrogenase (Complex I) that is believed to belong to the minimal assembly required for catalysis. Complex I functions in the transfer of electrons from NADH to the respiratory chain. The immediate electron acceptor for the enzyme is believed to be ubiquinone. The protein is NADH-ubiquinone oxidoreductase chain 5 (MT-ND5) of Anser caerulescens (Snow goose).